We begin with the raw amino-acid sequence, 253 residues long: ATP synthase subunit a (253 aa).

Transmembrane regions (helical) follow at residues 34-54, 89-109, 118-138, 156-178, 203-223, and 226-246; these read SSLF…LSFY, YFPF…IGMI, HIVF…LIGI, LAIV…FTLS, LSAG…LLAL, and LELA…CIYL.

The protein belongs to the ATPase A chain family. F-type ATPases have 2 components, CF(1) - the catalytic core - and CF(0) - the membrane proton channel. CF(1) has five subunits: alpha(3), beta(3), gamma(1), delta(1), epsilon(1). CF(0) has three main subunits: a, b and c.

The protein localises to the mitochondrion inner membrane. Mitochondrial membrane ATP synthase (F(1)F(0) ATP synthase or Complex V) produces ATP from ADP in the presence of a proton gradient across the membrane which is generated by electron transport complexes of the respiratory chain. F-type ATPases consist of two structural domains, F(1) - containing the extramembraneous catalytic core and F(0) - containing the membrane proton channel, linked together by a central stalk and a peripheral stalk. During catalysis, ATP synthesis in the catalytic domain of F(1) is coupled via a rotary mechanism of the central stalk subunits to proton translocation. Key component of the proton channel; it may play a direct role in the translocation of protons across the membrane. In Chondrus crispus (Carrageen Irish moss), this protein is ATP synthase subunit a (ATP6).